The chain runs to 235 residues: Exosome complex component Rrp4 (235 aa).

The region spanning 63–137 (GDLVIGYVTD…DEYPIILTLK (75 aa)) is the S1 motif domain. Residues 147–203 (GTVVEITPVKVPRVIGKRGSMLNTLMELGCDIVVGQNGRIWVKCKDPRDEVFLASLI) form the KH domain.

The protein belongs to the RRP4 family. In terms of assembly, component of the archaeal exosome complex. Forms a trimer of Rrp4 and/or Csl4 subunits. The trimer associates with a hexameric ring-like arrangement composed of 3 Rrp41-Rrp42 heterodimers.

It is found in the cytoplasm. In terms of biological role, non-catalytic component of the exosome, which is a complex involved in RNA degradation. Increases the RNA binding and the efficiency of RNA degradation. Confers strong poly(A) specificity to the exosome. In Pyrobaculum aerophilum (strain ATCC 51768 / DSM 7523 / JCM 9630 / CIP 104966 / NBRC 100827 / IM2), this protein is Exosome complex component Rrp4.